We begin with the raw amino-acid sequence, 163 residues long: Large ribosomal subunit protein uL22c (163 aa).

The protein belongs to the universal ribosomal protein uL22 family. As to quaternary structure, part of the 50S ribosomal subunit.

It localises to the plastid. The protein localises to the chloroplast. Its function is as follows. This protein binds specifically to 23S rRNA. The globular domain of the protein is located near the polypeptide exit tunnel on the outside of the subunit, while an extended beta-hairpin is found that lines the wall of the exit tunnel in the center of the 70S ribosome. The chain is Large ribosomal subunit protein uL22c (rpl22) from Lobularia maritima (Sweet alyssum).